The sequence spans 177 residues: RNA pyrophosphohydrolase (177 aa).

A Nudix hydrolase domain is found at 6–149 (GYRPNVGIVI…KRDVYRRVMK (144 aa)). A Nudix box motif is present at residues 38–59 (GGINPGESPEQAMYRELFEEVG).

The protein belongs to the Nudix hydrolase family. RppH subfamily. It depends on a divalent metal cation as a cofactor.

Functionally, accelerates the degradation of transcripts by removing pyrophosphate from the 5'-end of triphosphorylated RNA, leading to a more labile monophosphorylated state that can stimulate subsequent ribonuclease cleavage. The chain is RNA pyrophosphohydrolase from Pectobacterium atrosepticum (strain SCRI 1043 / ATCC BAA-672) (Erwinia carotovora subsp. atroseptica).